The chain runs to 476 residues: Protein transport protein Sec61 subunit alpha isoform 2 (476 aa).

At 1-33 (MGIKFLEVIKPFCAVLPEIQKPERKIQFREKVL) the chain is on the cytoplasmic side. A helical transmembrane segment spans residues 34–53 (WTAITLFIFLVCCQIPLFGI). At 54 to 76 (MSSDSADPFYWMRVILASNRGTL) the chain is on the lumenal side. Residues 77–96 (MELGISPIVTSGLIMQLLAG) traverse the membrane as a helical segment. Residues 97–117 (AKIIEVGDTPKDRALFNGAQK) are Cytoplasmic-facing. A helical transmembrane segment spans residues 118-138 (LFGMIITIGQAIVYVMTGMYG). At 139–144 (DPAEMG) the chain is on the lumenal side. The chain crosses the membrane as a helical span at residues 145–165 (AGICLLIIIQLFVAGLIVLLL). The Cytoplasmic segment spans residues 166–172 (DELLQKG). The helical transmembrane segment at 173-193 (YGLGSGISLFIATNICETIVW) threads the bilayer. The Lumenal segment spans residues 194 to 240 (KAFSPTTINTGRGTEFEGAVIALFHLLATRTDKVRALREAFYRQNLP). The chain crosses the membrane as a helical span at residues 241 to 261 (NLMNLIATVFVFAVVIYFQGF). The Cytoplasmic segment spans residues 262-288 (RVDLPIKSARYRGQYSSYPIKLFYTSN). A helical transmembrane segment spans residues 289 to 309 (IPIILQSALVSNLYVISQMLS). The Lumenal segment spans residues 310–354 (VRFSGNFLVNLLGQWADVSGGGPARSYPVGGLCYYLSPPESMGAI). The helical transmembrane segment at 355 to 375 (FEDPVHVVVYIIFMLGSCAFF) threads the bilayer. Residues 376 to 420 (SKTWIEVSGSSAKDVAKQLKEQQMVMRGHRDTSMVHELNRYIPTA) lie on the Cytoplasmic side of the membrane. A helical membrane pass occupies residues 421–441 (AAFGGLCIGALSVLADFLGAI). The Lumenal segment spans residues 442–445 (GSGT). Residues 446-462 (GILLAVTIIYQYFEIFV) traverse the membrane as a helical segment. Residues 463 to 476 (KEQAEVGGMGALFF) lie on the Cytoplasmic side of the membrane.

The protein belongs to the SecY/SEC61-alpha family. The SEC61 channel-forming translocon complex consists of channel-forming core components SEC61A1, SEC61B and SEC61G and different auxiliary components such as SEC62 and SEC63.

It localises to the endoplasmic reticulum membrane. Its function is as follows. Component of SEC61 channel-forming translocon complex that mediates transport of signal peptide-containing precursor polypeptides across the endoplasmic reticulum (ER). Forms a ribosome receptor and a gated pore in the ER membrane, both functions required for cotranslational translocation of nascent polypeptides. In Homo sapiens (Human), this protein is Protein transport protein Sec61 subunit alpha isoform 2 (SEC61A2).